Reading from the N-terminus, the 122-residue chain is Holo-[acyl-carrier-protein] synthase (122 aa).

Mg(2+) contacts are provided by Asp8 and Glu57.

This sequence belongs to the P-Pant transferase superfamily. AcpS family. It depends on Mg(2+) as a cofactor.

The protein localises to the cytoplasm. The enzyme catalyses apo-[ACP] + CoA = holo-[ACP] + adenosine 3',5'-bisphosphate + H(+). Its function is as follows. Transfers the 4'-phosphopantetheine moiety from coenzyme A to a Ser of acyl-carrier-protein. The chain is Holo-[acyl-carrier-protein] synthase from Exiguobacterium sp. (strain ATCC BAA-1283 / AT1b).